We begin with the raw amino-acid sequence, 986 residues long: P3N-PIPO polyprotein (986 aa).

Residues 141 to 284 enclose the Peptidase S30 domain; the sequence is KLTEGQMNHL…QGVMDSMVQF (144 aa). Active-site for P1 proteinase activity residues include His-192, Asp-201, and Ser-235. The Involved in interaction with stylet and aphid transmission motif lies at 334-337; the sequence is KITC. Positions 592–594 match the Involved in virions binding and aphid transmission motif; it reads PTK. Residues 618 to 740 enclose the Peptidase C6 domain; sequence LYIARQGFCY…ESDIKHYRVG (123 aa). Residues Cys-626 and His-699 each act as for helper component proteinase activity in the active site.

It belongs to the potyviridae P3N-PIPO polyprotein family. In terms of assembly, interacts (via PIPO domain) with host PCaP1 protein; this interaction may help to anchor the movement complex to the plasma membrane from which the complex could move to the plasmodesmata. In terms of processing, potyviral RNA is expressed as two polyproteins which undergo post-translational proteolytic processing. Genome polyprotein is processed by NIa-pro, P1 and HC-pro proteinases resulting in the production of at least ten individual proteins. P3N-PIPO is cleaved by P1 and HC-pro proteinases resulting in the production of three individual proteins. The P1 proteinase and the HC-pro cleave only their respective C-termini autocatalytically.

Its subcellular location is the host cell junction. The protein resides in the host plasmodesma. The catalysed reaction is Hydrolyzes a Gly-|-Gly bond at its own C-terminus, commonly in the sequence -Tyr-Xaa-Val-Gly-|-Gly, in the processing of the potyviral polyprotein.. Functionally, required for aphid transmission and also has proteolytic activity. Only cleaves a Gly-Gly dipeptide at its own C-terminus. Interacts with virions and aphid stylets. Acts as a suppressor of RNA-mediated gene silencing, also known as post-transcriptional gene silencing (PTGS), a mechanism of plant viral defense that limits the accumulation of viral RNAs. May have RNA-binding activity. Allows efficient cell to cell propagation, by bypassing the host cell wall barrier. Transports viral genome to neighboring plant cells directly through plasmosdesmata, without any budding. In Capsicum (peppers), this protein is P3N-PIPO polyprotein.